Reading from the N-terminus, the 301-residue chain is Homoserine O-acetyltransferase (301 aa).

Residue C142 is the Acyl-thioester intermediate of the active site. Substrate is bound by residues K163 and S192. Catalysis depends on H235, which acts as the Proton acceptor. The active site involves E237. A substrate-binding site is contributed by R249.

Belongs to the MetA family.

The protein localises to the cytoplasm. It carries out the reaction L-homoserine + acetyl-CoA = O-acetyl-L-homoserine + CoA. The protein operates within amino-acid biosynthesis; L-methionine biosynthesis via de novo pathway; O-acetyl-L-homoserine from L-homoserine: step 1/1. Its function is as follows. Transfers an acetyl group from acetyl-CoA to L-homoserine, forming acetyl-L-homoserine. This is Homoserine O-acetyltransferase from Bacillus mycoides (strain KBAB4) (Bacillus weihenstephanensis).